The chain runs to 301 residues: F-box protein At4g02733 (301 aa).

The F-box domain maps to 91 to 146 (NSISWFLPSELTVKVFSMVDTKSLMQASACCTMFNNCAMDPLCYFHIDLTKAFKHV).

This chain is F-box protein At4g02733, found in Arabidopsis thaliana (Mouse-ear cress).